Here is a 169-residue protein sequence, read N- to C-terminus: Disulfide bond formation protein B (169 aa).

Residues 1–14 are Cytoplasmic-facing; it reads MMRFLNHCSQGRSA. A helical transmembrane segment spans residues 15-31; sequence WLLMILTALILESSALY. Topologically, residues 32-49 are periplasmic; sequence FQHVMKLQPCVMCIYERV. A disulfide bond links Cys41 and Cys44. A helical transmembrane segment spans residues 50–65; the sequence is ALFGVLSAGILGVIAP. Residues 66–71 are Cytoplasmic-facing; sequence KTPLRW. Residues 72–89 traverse the membrane as a helical segment; that stretch reads LAIILWIYSAWGGLQLAW. The Periplasmic segment spans residues 90 to 144; that stretch reads QHTMMQLHPSPFNTCDFFVNFPSWLALNQWLPSVFEATGDCSVRQWQFLTLEMPQ. Cysteines 104 and 130 form a disulfide. Residues 145 to 163 traverse the membrane as a helical segment; sequence WLVGIFAAYLVVAALVLIS. The Cytoplasmic segment spans residues 164 to 169; sequence QFFSRK.

The protein belongs to the DsbB family.

The protein localises to the cell inner membrane. Functionally, required for disulfide bond formation in some periplasmic proteins. Acts by oxidizing the DsbA protein. The polypeptide is Disulfide bond formation protein B (Photorhabdus laumondii subsp. laumondii (strain DSM 15139 / CIP 105565 / TT01) (Photorhabdus luminescens subsp. laumondii)).